The following is a 490-amino-acid chain: Cobyric acid synthase (490 aa).

Positions 253–440 (KLRVAAPAAP…LHGVFDEPAA (188 aa)) constitute a GATase cobBQ-type domain. The active-site Nucleophile is the Cys334. His432 is a catalytic residue.

This sequence belongs to the CobB/CobQ family. CobQ subfamily.

It functions in the pathway cofactor biosynthesis; adenosylcobalamin biosynthesis. In terms of biological role, catalyzes amidations at positions B, D, E, and G on adenosylcobyrinic A,C-diamide. NH(2) groups are provided by glutamine, and one molecule of ATP is hydrogenolyzed for each amidation. The sequence is that of Cobyric acid synthase from Chromobacterium violaceum (strain ATCC 12472 / DSM 30191 / JCM 1249 / CCUG 213 / NBRC 12614 / NCIMB 9131 / NCTC 9757 / MK).